The following is a 211-amino-acid chain: Glycerol-3-phosphate acyltransferase (211 aa).

A run of 5 helical transmembrane segments spans residues 8 to 28 (YCLA…LILT), 84 to 104 (LALP…WLGF), 116 to 136 (VLLA…FAVA), 145 to 165 (AALC…GMGL), and 170 to 190 (LAQS…LVFL).

This sequence belongs to the PlsY family. Probably interacts with PlsX.

Its subcellular location is the cell inner membrane. The catalysed reaction is an acyl phosphate + sn-glycerol 3-phosphate = a 1-acyl-sn-glycero-3-phosphate + phosphate. It participates in lipid metabolism; phospholipid metabolism. Functionally, catalyzes the transfer of an acyl group from acyl-phosphate (acyl-PO(4)) to glycerol-3-phosphate (G3P) to form lysophosphatidic acid (LPA). This enzyme utilizes acyl-phosphate as fatty acyl donor, but not acyl-CoA or acyl-ACP. This chain is Glycerol-3-phosphate acyltransferase, found in Granulibacter bethesdensis (strain ATCC BAA-1260 / CGDNIH1).